We begin with the raw amino-acid sequence, 226 residues long: Large ribosomal subunit protein uL3 (226 aa).

A disordered region spans residues Asn-136 to Pro-162. The segment covering Phe-137–Met-158 has biased composition (polar residues). The residue at position 160 (Gln-160) is an N5-methylglutamine.

Belongs to the universal ribosomal protein uL3 family. Part of the 50S ribosomal subunit. Forms a cluster with proteins L14 and L19. Methylated by PrmB.

One of the primary rRNA binding proteins, it binds directly near the 3'-end of the 23S rRNA, where it nucleates assembly of the 50S subunit. The sequence is that of Large ribosomal subunit protein uL3 from Methylibium petroleiphilum (strain ATCC BAA-1232 / LMG 22953 / PM1).